A 106-amino-acid polypeptide reads, in one-letter code: Urease subunit beta (106 aa).

It belongs to the urease beta subunit family. As to quaternary structure, heterotrimer of UreA (gamma), UreB (beta) and UreC (alpha) subunits. Three heterotrimers associate to form the active enzyme.

The protein resides in the cytoplasm. It catalyses the reaction urea + 2 H2O + H(+) = hydrogencarbonate + 2 NH4(+). The protein operates within nitrogen metabolism; urea degradation; CO(2) and NH(3) from urea (urease route): step 1/1. The sequence is that of Urease subunit beta from Synechococcus sp. (strain WH7805).